The following is a 476-amino-acid chain: Cysteine--tRNA ligase (476 aa).

C36 serves as a coordination point for Zn(2+). Residues P38 to N48 carry the 'HIGH' region motif. 3 residues coordinate Zn(2+): C221, H246, and E250. The short motif at K278–S282 is the 'KMSKS' region element. Residue K281 participates in ATP binding.

It belongs to the class-I aminoacyl-tRNA synthetase family. In terms of assembly, monomer. Zn(2+) is required as a cofactor.

The protein resides in the cytoplasm. It carries out the reaction tRNA(Cys) + L-cysteine + ATP = L-cysteinyl-tRNA(Cys) + AMP + diphosphate. The sequence is that of Cysteine--tRNA ligase from Chlamydia caviae (strain ATCC VR-813 / DSM 19441 / 03DC25 / GPIC) (Chlamydophila caviae).